Consider the following 373-residue polypeptide: Flap endonuclease 1 (373 aa).

The tract at residues 1–105 is N-domain; the sequence is MGIKGLNALI…GELEKRLKRR (105 aa). Mg(2+) is bound at residue aspartate 34. Residues arginine 47 and arginine 71 each contribute to the DNA site. Aspartate 87, glutamate 159, glutamate 161, aspartate 180, and aspartate 182 together coordinate Mg(2+). Positions 123–254 are I-domain; that stretch reads DIAKFERRTV…VTAFKLIKEH (132 aa). Glutamate 159 is a DNA binding site. DNA contacts are provided by glycine 232 and aspartate 234. Aspartate 234 contacts Mg(2+). The segment at 340–348 is interaction with PCNA; sequence TQGRLDKFF. The interval 347–373 is disordered; sequence FFVVKKRPAEEKKGKNTKEEKPKKKRK.

This sequence belongs to the XPG/RAD2 endonuclease family. FEN1 subfamily. Interacts with PCNA. Three molecules of FEN1 bind to one PCNA trimer with each molecule binding to one PCNA monomer. PCNA stimulates the nuclease activity without altering cleavage specificity. Requires Mg(2+) as cofactor. Phosphorylated. Phosphorylation upon DNA damage induces relocalization to the nuclear plasma.

The protein localises to the nucleus. It localises to the nucleolus. Its subcellular location is the nucleoplasm. The protein resides in the mitochondrion. Functionally, structure-specific nuclease with 5'-flap endonuclease and 5'-3' exonuclease activities involved in DNA replication and repair. During DNA replication, cleaves the 5'-overhanging flap structure that is generated by displacement synthesis when DNA polymerase encounters the 5'-end of a downstream Okazaki fragment. It enters the flap from the 5'-end and then tracks to cleave the flap base, leaving a nick for ligation. Also involved in the long patch base excision repair (LP-BER) pathway, by cleaving within the apurinic/apyrimidinic (AP) site-terminated flap. Acts as a genome stabilization factor that prevents flaps from equilibrating into structures that lead to duplications and deletions. Also possesses 5'-3' exonuclease activity on nicked or gapped double-stranded DNA, and exhibits RNase H activity. Also involved in replication and repair of rDNA and in repairing mitochondrial DNA. This is Flap endonuclease 1 from Komagataella phaffii (strain GS115 / ATCC 20864) (Yeast).